Consider the following 124-residue polypeptide: Small ribosomal subunit protein uS12 (124 aa).

Asp-89 carries the 3-methylthioaspartic acid modification.

The protein belongs to the universal ribosomal protein uS12 family. Part of the 30S ribosomal subunit. Contacts proteins S8 and S17. May interact with IF1 in the 30S initiation complex.

In terms of biological role, with S4 and S5 plays an important role in translational accuracy. Its function is as follows. Interacts with and stabilizes bases of the 16S rRNA that are involved in tRNA selection in the A site and with the mRNA backbone. Located at the interface of the 30S and 50S subunits, it traverses the body of the 30S subunit contacting proteins on the other side and probably holding the rRNA structure together. The combined cluster of proteins S8, S12 and S17 appears to hold together the shoulder and platform of the 30S subunit. This is Small ribosomal subunit protein uS12 from Histophilus somni (strain 129Pt) (Haemophilus somnus).